Reading from the N-terminus, the 508-residue chain is MKEIREGAPGAQLDDLVAALGALAERRGGDGARAVITGVTCDSRAVTPGALFVAVRGLVADGHHFIGAAIEAGAVAVACEELPAAYSDSVTWLVVPDARKALAELSKAFYGNASDKLMLIGVTGTNGKTTTARLVTSMLNASGVAAGYIGTGLCRIGNHDIPLERTTPEPNRLHDLFRQMVDAGCRAAVMEVSSHSLVLDRVHGLFFRAAVFTNLTPEHLDFHETMEEYAEAKRLLFDQLNAEGFAVINADDPRAEFMAARLAPERVFCCSTGDNTSLCDPARRFHAVITASTVEGSKADVTFDGQSMAMQVPLPGAYNVMNMLEAFTVGVGLGIDPATALRSLAAADAIAGRMERIWSRDRSRCAVVDYAHTPDALQKALEALRAVTPADAKLAVVFGCGGNRDRQKRPEMGRIAAELADRVILTSDNPRDENPEAILDEVEAGMAGRVHLRIADRAEAIRRAVEQLGAGDILLVAGKGHEAYQEIRGVKHHFSDRECLEACFAQMK.

Residue Ser-43 coordinates UDP-N-acetyl-alpha-D-muramoyl-L-alanyl-D-glutamate. An ATP-binding site is contributed by 124-130; sequence GTNGKTT. Residues 166-167, Ser-193, and Arg-201 contribute to the UDP-N-acetyl-alpha-D-muramoyl-L-alanyl-D-glutamate site; that span reads TT. Lys-233 carries the N6-carboxylysine modification. Meso-2,6-diaminopimelate is bound by residues Arg-404, 428 to 431, Gly-478, and Glu-482; that span reads DNPR. Positions 428–431 match the Meso-diaminopimelate recognition motif motif; the sequence is DNPR.

Belongs to the MurCDEF family. MurE subfamily. Mg(2+) is required as a cofactor. Post-translationally, carboxylation is probably crucial for Mg(2+) binding and, consequently, for the gamma-phosphate positioning of ATP.

The protein localises to the cytoplasm. It catalyses the reaction UDP-N-acetyl-alpha-D-muramoyl-L-alanyl-D-glutamate + meso-2,6-diaminopimelate + ATP = UDP-N-acetyl-alpha-D-muramoyl-L-alanyl-gamma-D-glutamyl-meso-2,6-diaminopimelate + ADP + phosphate + H(+). It participates in cell wall biogenesis; peptidoglycan biosynthesis. Functionally, catalyzes the addition of meso-diaminopimelic acid to the nucleotide precursor UDP-N-acetylmuramoyl-L-alanyl-D-glutamate (UMAG) in the biosynthesis of bacterial cell-wall peptidoglycan. The polypeptide is UDP-N-acetylmuramoyl-L-alanyl-D-glutamate--2,6-diaminopimelate ligase (Chlorobaculum tepidum (strain ATCC 49652 / DSM 12025 / NBRC 103806 / TLS) (Chlorobium tepidum)).